Reading from the N-terminus, the 445-residue chain is Exodeoxyribonuclease 7 large subunit (445 aa).

It belongs to the XseA family. Heterooligomer composed of large and small subunits.

The protein resides in the cytoplasm. The enzyme catalyses Exonucleolytic cleavage in either 5'- to 3'- or 3'- to 5'-direction to yield nucleoside 5'-phosphates.. In terms of biological role, bidirectionally degrades single-stranded DNA into large acid-insoluble oligonucleotides, which are then degraded further into small acid-soluble oligonucleotides. The polypeptide is Exodeoxyribonuclease 7 large subunit (Geotalea daltonii (strain DSM 22248 / JCM 15807 / FRC-32) (Geobacter daltonii)).